We begin with the raw amino-acid sequence, 430 residues long: tRNA(Ile)-lysidine synthase (430 aa).

Residue 27-32 participates in ATP binding; the sequence is SGGSDS.

This sequence belongs to the tRNA(Ile)-lysidine synthase family.

Its subcellular location is the cytoplasm. The catalysed reaction is cytidine(34) in tRNA(Ile2) + L-lysine + ATP = lysidine(34) in tRNA(Ile2) + AMP + diphosphate + H(+). In terms of biological role, ligates lysine onto the cytidine present at position 34 of the AUA codon-specific tRNA(Ile) that contains the anticodon CAU, in an ATP-dependent manner. Cytidine is converted to lysidine, thus changing the amino acid specificity of the tRNA from methionine to isoleucine. This is tRNA(Ile)-lysidine synthase from Rickettsia akari (strain Hartford).